A 2067-amino-acid polypeptide reads, in one-letter code: Non-reducing polyketide synthase PKS12 (2067 aa).

Residues 4 to 241 (FVFGDQSTRF…LPVPIYAPYH (238 aa)) are N-terminal acylcarrier protein transacylase (SAT) domain. Positions 350–373 (NSMGPKASTSHSSAETQTESSSKN) are disordered. The span at 356–373 (ASTSHSSAETQTESSSKN) shows a compositional bias: polar residues. Positions 373–808 (NSKIAIVAMS…GGNSAVLLQD (436 aa)) constitute a Ketosynthase family 3 (KS3) domain. Active-site for beta-ketoacyl synthase activity residues include Cys-545, His-680, and His-725. Positions 912 to 1199 (FVFSGQGAQY…VVCSTFLKSS (288 aa)) are malonyl-CoA:ACP transacylase (MAT) domain. Ser-1001 serves as the catalytic For acyl/malonyl transferase activity. An N-terminal hotdog fold region spans residues 1297-1433 (QKILQETSLD…CELRLEHPSQ (137 aa)). Residues 1297 to 1606 (QKILQETSLD…FQGLPRRVLN (310 aa)) enclose the PKS/mFAS DH domain. His-1329 acts as the Proton acceptor; for dehydratase activity in catalysis. The tract at residues 1329–1604 (HRVNGVKVCT…ITFQGLPRRV (276 aa)) is product template (PT) domain. Residues 1460–1606 (LDSMLATGMV…FQGLPRRVLN (147 aa)) are C-terminal hotdog fold. The active-site Proton donor; for dehydratase activity is the Asp-1519. The segment at 1619-1648 (APMGRRDVPPSRMDVPPVRSGEGPPTSAPT) is disordered. A Carrier domain is found at 1660–1738 (TSMDSRLRPL…SFKLFLGLVD (79 aa)). An O-(pantetheine 4'-phosphoryl)serine modification is found at Ser-1698. Positions 1742–1779 (KSSSGSDGSGRSSPAPGIESGATTPPMSEEDQDKIVSS) are disordered. The span at 1743 to 1754 (SSSGSDGSGRSS) shows a compositional bias: low complexity. Positions 1781 to 2065 (SLHQFQASST…YVSAFLARAL (285 aa)) are claisen cyclase domain. Ser-1875 (for Claisen cyclase activity) is an active-site residue.

The catalysed reaction is 6 malonyl-CoA + acetyl-CoA + 6 H(+) = naphtopyrone YWA1 + 6 CO2 + 7 CoA + H2O. It participates in pigment biosynthesis. Functionally, non-reducing polyketide synthase; part of the gene cluster that mediates the biosynthesis of aurofusarin, a red mycelium pigment which is acting as a mycotoxin. The first step is performed by the polyketide synthase which condenses one acetyl-CoA and 6 malonyl-CoA units to form the first intermediate, the cyclic heptaketide and yellow pigment YWA1. The C2 hydroxyl group in the pyrone ring of YWA1 is probably formed during ring closure by an aldol-type cyclization reaction. The dehydratase aurZ then acts as the first tailoring enzyme in the aurofusarin biosynthetic pathway by converting YWA1 to nor-rubrofusarin. Nor-rubrofusarin is then methylated to rubrofusarin by the O-methyltransferase aurJ. Rubrofusarin is then transported across the plasma membrane by the rubrofusarin-specific pump aurT for further enzymatic processing by the extracellular complex composed of GIP1, aurF, aurO and aurS to yield aurofusarin. The chain is Non-reducing polyketide synthase PKS12 from Gibberella zeae (strain ATCC MYA-4620 / CBS 123657 / FGSC 9075 / NRRL 31084 / PH-1) (Wheat head blight fungus).